A 69-amino-acid polypeptide reads, in one-letter code: Cell division protein ZapB (69 aa).

A coiled-coil region spans residues 6-68; the sequence is LEQLEARVQS…LGKMDQMNSE (63 aa).

The protein belongs to the ZapB family. In terms of assembly, homodimer. The ends of the coiled-coil dimer bind to each other, forming polymers. Interacts with FtsZ.

It is found in the cytoplasm. Its function is as follows. Non-essential, abundant cell division factor that is required for proper Z-ring formation. It is recruited early to the divisome by direct interaction with FtsZ, stimulating Z-ring assembly and thereby promoting cell division earlier in the cell cycle. Its recruitment to the Z-ring requires functional FtsA or ZipA. This is Cell division protein ZapB from Tolumonas auensis (strain DSM 9187 / NBRC 110442 / TA 4).